The sequence spans 226 residues: Protein-L-isoaspartate O-methyltransferase (226 aa).

Residue S66 is part of the active site.

It belongs to the methyltransferase superfamily. L-isoaspartyl/D-aspartyl protein methyltransferase family.

The protein localises to the cytoplasm. It catalyses the reaction [protein]-L-isoaspartate + S-adenosyl-L-methionine = [protein]-L-isoaspartate alpha-methyl ester + S-adenosyl-L-homocysteine. Its function is as follows. Catalyzes the methyl esterification of L-isoaspartyl residues in peptides and proteins that result from spontaneous decomposition of normal L-aspartyl and L-asparaginyl residues. It plays a role in the repair and/or degradation of damaged proteins. The sequence is that of Protein-L-isoaspartate O-methyltransferase from Methanopyrus kandleri (strain AV19 / DSM 6324 / JCM 9639 / NBRC 100938).